The sequence spans 224 residues: Oxalate oxidase GF-2.8 (224 aa).

The signal sequence occupies residues 1–23; sequence MGYSKTLVAGLFAMLLLAPAVLA. The cysteines at positions 33 and 49 are disulfide-linked. In terms of domain architecture, Cupin type-1 spans 63-214; sequence SKLAKAGNTS…ALRVEARVVE (152 aa). N70 and N75 each carry an N-linked (GlcNAc...) asparagine glycan. H111, H113, E118, and H160 together coordinate Mn(2+).

The protein belongs to the germin family. As to quaternary structure, oligomer (believed to be a pentamer but probably hexamer).

The protein localises to the secreted. It is found in the extracellular space. It localises to the apoplast. The protein resides in the cytoplasm. Its subcellular location is the cell wall. It catalyses the reaction oxalate + O2 + 2 H(+) = H2O2 + 2 CO2. Its function is as follows. Produces developmental and stress-related release of hydrogen peroxide in the apoplast. May play an important role in several aspects of plant growth and defense mechanisms. This is Oxalate oxidase GF-2.8 from Triticum aestivum (Wheat).